A 126-amino-acid polypeptide reads, in one-letter code: Small ribosomal subunit protein uS12 (126 aa).

A disordered region spans residues 1–28 (MPTIQQLIRSERSKVQKKTKSPALKQCP). At aspartate 89 the chain carries 3-methylthioaspartic acid. The disordered stretch occupies residues 104–126 (ATGVKDRKQGRSKYGTKREKAKK). A compositionally biased stretch (basic residues) spans 113–126 (GRSKYGTKREKAKK).

It belongs to the universal ribosomal protein uS12 family. Part of the 30S ribosomal subunit. Contacts proteins S8 and S17. May interact with IF1 in the 30S initiation complex.

In terms of biological role, with S4 and S5 plays an important role in translational accuracy. Functionally, interacts with and stabilizes bases of the 16S rRNA that are involved in tRNA selection in the A site and with the mRNA backbone. Located at the interface of the 30S and 50S subunits, it traverses the body of the 30S subunit contacting proteins on the other side and probably holding the rRNA structure together. The combined cluster of proteins S8, S12 and S17 appears to hold together the shoulder and platform of the 30S subunit. The protein is Small ribosomal subunit protein uS12 of Synechocystis sp. (strain ATCC 27184 / PCC 6803 / Kazusa).